Here is a 152-residue protein sequence, read N- to C-terminus: Large-conductance mechanosensitive channel (152 aa).

The next 2 membrane-spanning stretches (helical) occupy residues 14–34 (VIDLAIGVVIGGAFGKIVTSL) and 81–101 (GLFLNNLINFLIIAFSIFIVI).

Belongs to the MscL family. Homopentamer.

The protein localises to the cell membrane. Channel that opens in response to stretch forces in the membrane lipid bilayer. May participate in the regulation of osmotic pressure changes within the cell. This Clostridium perfringens (strain ATCC 13124 / DSM 756 / JCM 1290 / NCIMB 6125 / NCTC 8237 / Type A) protein is Large-conductance mechanosensitive channel.